Reading from the N-terminus, the 140-residue chain is Probable lipoprotein LppE (140 aa).

Residues 1-21 (MCNRLVTVTGVAMVVAAGLSA) form the signal peptide. Cysteine 22 carries the N-palmitoyl cysteine lipid modification. The S-diacylglycerol cysteine moiety is linked to residue cysteine 22.

The protein belongs to the mycobacterial 19 kDa antigen family.

It is found in the cell membrane. The polypeptide is Probable lipoprotein LppE (lppE) (Mycobacterium tuberculosis (strain ATCC 25618 / H37Rv)).